We begin with the raw amino-acid sequence, 530 residues long: Glucose-6-phosphate isomerase (530 aa).

E322 serves as the catalytic Proton donor. Catalysis depends on residues H351 and K455.

The protein belongs to the GPI family.

The protein localises to the cytoplasm. It carries out the reaction alpha-D-glucose 6-phosphate = beta-D-fructose 6-phosphate. The protein operates within carbohydrate biosynthesis; gluconeogenesis. It functions in the pathway carbohydrate degradation; glycolysis; D-glyceraldehyde 3-phosphate and glycerone phosphate from D-glucose: step 2/4. Functionally, catalyzes the reversible isomerization of glucose-6-phosphate to fructose-6-phosphate. The sequence is that of Glucose-6-phosphate isomerase from Citrifermentans bemidjiense (strain ATCC BAA-1014 / DSM 16622 / JCM 12645 / Bem) (Geobacter bemidjiensis).